A 547-amino-acid chain; its full sequence is Probable aquaporin-5 (547 aa).

Polar residues predominate over residues 1–13 (MSSSILNNRSARS). Residues 1–208 (MSSSILNNRS…DPRIPPNDRR (208 aa)) form a disordered region. Topologically, residues 1–269 (MSSSILNNRS…QWMNSNFKNH (269 aa)) are cytoplasmic. A compositionally biased stretch (low complexity) spans 15-32 (PAGANPAFNPPAEASSSS). Basic and acidic residues-rich tracts occupy residues 152-169 (EYER…DRYT) and 198-208 (DDPRIPPNDRR). A helical membrane pass occupies residues 270–290 (FVAGVGEFIGTTMFLFFAFAG). Residues 291–316 (TEVANIQADTTNRTTTGESTGSLNVS) lie on the Extracellular side of the membrane. N-linked (GlcNAc...) asparagine glycosylation is found at N302 and N314. Residues 317–337 (KLLYISIIFGFSLMVNVWVFF) traverse the membrane as a helical segment. Residues 338–363 (RISGGLFNPAVTMAMLMVKAISVTRA) are Cytoplasmic-facing. An NPA 1 motif is present at residues 345–347 (NPA). The helical transmembrane segment at 364-384 (IVLFLAQILGSMLASVVVRYL) threads the bilayer. Residues 385-400 (FPETFNVRTTLGGGAS) lie on the Extracellular side of the membrane. The helical transmembrane segment at 401-421 (LVQGVFIEALLTAELVFTIFM) threads the bilayer. Residues 422-428 (LAKEKHR) lie on the Cytoplasmic side of the membrane. Residues 429–449 (ATFIAPVGIGLALFIAEMVGV) traverse the membrane as a helical segment. Topologically, residues 450-475 (QFTGGSLNPARSFGPCVITGSFDTEH) are extracellular. An NPA 2 motif is present at residues 457-459 (NPA). Residues 476–496 (WIYWVGPAIGSLIAVCFYWFI) form a helical membrane-spanning segment. The Cytoplasmic portion of the chain corresponds to 497 to 547 (KTLEYEMANPGADGDDLNDPTKNPEKRAEIQASKPVPTAAFGSGKTASILS). The tract at residues 510–547 (GDDLNDPTKNPEKRAEIQASKPVPTAAFGSGKTASILS) is disordered.

Belongs to the MIP/aquaporin (TC 1.A.8) family.

Its subcellular location is the membrane. It carries out the reaction H2O(in) = H2O(out). Probable water channel that may have redundant functions with FgAQP3. This is Probable aquaporin-5 from Gibberella zeae (strain ATCC MYA-4620 / CBS 123657 / FGSC 9075 / NRRL 31084 / PH-1) (Wheat head blight fungus).